A 114-amino-acid chain; its full sequence is Small ribosomal subunit protein bS6 (114 aa).

This sequence belongs to the bacterial ribosomal protein bS6 family.

Functionally, binds together with bS18 to 16S ribosomal RNA. In Bacteroides fragilis (strain YCH46), this protein is Small ribosomal subunit protein bS6.